Consider the following 287-residue polypeptide: Toxin zeta (287 aa).

40 to 47 provides a ligand contact to ATP; that stretch reads GQPGSGKT. The tract at residues 250–287 is disordered; the sequence is MVQNQHQETPEFKAIQQKMESLQPPTPPIPKTPKLPGI. The segment covering 273–287 has biased composition (pro residues); it reads PPTPPIPKTPKLPGI.

Belongs to the zeta toxin family. As to quaternary structure, in the presence of the epsilon antitoxin, forms an inactive PezA(2)PezT(2) heterotetramer.

It catalyses the reaction UDP-N-acetyl-alpha-D-glucosamine + ATP = UDP-N-acetyl-alpha-D-glucosamine 3'-phosphate + ADP + H(+). Its function is as follows. Toxic component of a type II toxin-antitoxin (TA) system. Phosphorylates UDP-N-acetyl-D-glucosamine (UNAG) on the 3'-hydroxyl group of the N-acetyl-D-glucosamine moiety, yielding UNAG-3P. UNAG-3P inhibits MurA, the first committed step in cell wall synthesis, which is then blocked. Phosphorylation is inhibited by cognate epsilon antitoxin. Part of a postsegregational killing (PSK) system involved in the killing of plasmid-free cells. The zeta toxin induces programmed cell death. This is Toxin zeta from Streptococcus agalactiae.